The chain runs to 199 residues: Pneumococcal vaccine antigen A homolog (199 aa).

The protein resides in the cell surface. In Streptococcus pyogenes serotype M18 (strain MGAS8232), this protein is Pneumococcal vaccine antigen A homolog (pvaA).